The following is a 267-amino-acid chain: Ribosomal RNA small subunit methyltransferase A (267 aa).

Residues His13, Leu15, Gly40, Glu61, Asp85, and Asn105 each contribute to the S-adenosyl-L-methionine site.

This sequence belongs to the class I-like SAM-binding methyltransferase superfamily. rRNA adenine N(6)-methyltransferase family. RsmA subfamily.

It is found in the cytoplasm. It catalyses the reaction adenosine(1518)/adenosine(1519) in 16S rRNA + 4 S-adenosyl-L-methionine = N(6)-dimethyladenosine(1518)/N(6)-dimethyladenosine(1519) in 16S rRNA + 4 S-adenosyl-L-homocysteine + 4 H(+). Functionally, specifically dimethylates two adjacent adenosines (A1518 and A1519) in the loop of a conserved hairpin near the 3'-end of 16S rRNA in the 30S particle. May play a critical role in biogenesis of 30S subunits. This Bacteroides thetaiotaomicron (strain ATCC 29148 / DSM 2079 / JCM 5827 / CCUG 10774 / NCTC 10582 / VPI-5482 / E50) protein is Ribosomal RNA small subunit methyltransferase A.